Here is a 110-residue protein sequence, read N- to C-terminus: Protein YcgL (110 aa).

Residues 14-98 (MFCVIYRSSK…PPEDLLKQHL (85 aa)) enclose the YcgL domain. The interval 88-110 (PPPEDLLKQHLSSVGQNTSHADR) is disordered. Residues 97 to 110 (HLSSVGQNTSHADR) are compositionally biased toward polar residues.

In Salmonella schwarzengrund (strain CVM19633), this protein is Protein YcgL.